Reading from the N-terminus, the 339-residue chain is Glycerol-3-phosphate dehydrogenase [NAD(P)+] (339 aa).

The NADPH site is built by Ser-15, Tyr-16, His-36, and Lys-110. Sn-glycerol 3-phosphate is bound by residues Lys-110, Gly-139, and Thr-141. Ala-143 is a binding site for NADPH. 5 residues coordinate sn-glycerol 3-phosphate: Lys-195, Asp-248, Ser-258, Arg-259, and Asn-260. Lys-195 (proton acceptor) is an active-site residue. Arg-259 contributes to the NADPH binding site. 2 residues coordinate NADPH: Val-283 and Glu-285.

This sequence belongs to the NAD-dependent glycerol-3-phosphate dehydrogenase family.

Its subcellular location is the cytoplasm. It catalyses the reaction sn-glycerol 3-phosphate + NAD(+) = dihydroxyacetone phosphate + NADH + H(+). The enzyme catalyses sn-glycerol 3-phosphate + NADP(+) = dihydroxyacetone phosphate + NADPH + H(+). It participates in membrane lipid metabolism; glycerophospholipid metabolism. Its function is as follows. Catalyzes the reduction of the glycolytic intermediate dihydroxyacetone phosphate (DHAP) to sn-glycerol 3-phosphate (G3P), the key precursor for phospholipid synthesis. This is Glycerol-3-phosphate dehydrogenase [NAD(P)+] from Shigella flexneri serotype 5b (strain 8401).